An 80-amino-acid polypeptide reads, in one-letter code: RNA-binding protein Hfq (80 aa).

Residues 10–69 form the Sm domain; that stretch reads DPFLNVLRKEHIPVSIYLVNGIKLQGHIDSFDQYVVLLRNSVTQMVYKHAISTIVPGKAV.

It belongs to the Hfq family. In terms of assembly, homohexamer.

In terms of biological role, RNA chaperone that binds small regulatory RNA (sRNAs) and mRNAs to facilitate mRNA translational regulation in response to envelope stress, environmental stress and changes in metabolite concentrations. Also binds with high specificity to tRNAs. This Nitrosomonas eutropha (strain DSM 101675 / C91 / Nm57) protein is RNA-binding protein Hfq.